The following is a 641-amino-acid chain: DNA mismatch repair protein MutL (641 aa).

The segment at 345–445 (PAAVAPPAPA…GDTSLGDTSP (101 aa)) is disordered. The span at 419–429 (PRTEPATRTGE) shows a compositional bias: basic and acidic residues. A compositionally biased stretch (polar residues) spans 432–442 (GISSGDTSLGD).

This sequence belongs to the DNA mismatch repair MutL/HexB family.

Functionally, this protein is involved in the repair of mismatches in DNA. It is required for dam-dependent methyl-directed DNA mismatch repair. May act as a 'molecular matchmaker', a protein that promotes the formation of a stable complex between two or more DNA-binding proteins in an ATP-dependent manner without itself being part of a final effector complex. In Azotobacter vinelandii (strain DJ / ATCC BAA-1303), this protein is DNA mismatch repair protein MutL.